The chain runs to 317 residues: Glycine--tRNA ligase alpha subunit (317 aa).

This sequence belongs to the class-II aminoacyl-tRNA synthetase family. As to quaternary structure, tetramer of two alpha and two beta subunits.

It is found in the cytoplasm. It catalyses the reaction tRNA(Gly) + glycine + ATP = glycyl-tRNA(Gly) + AMP + diphosphate. This chain is Glycine--tRNA ligase alpha subunit, found in Leptothrix cholodnii (strain ATCC 51168 / LMG 8142 / SP-6) (Leptothrix discophora (strain SP-6)).